A 494-amino-acid chain; its full sequence is Alpha-amylase-related protein (494 aa).

A signal peptide spans 1 to 20; the sequence is MFKFALALTLCLAGASLSLA. Glutamine 21 is modified (pyrrolidone carboxylic acid). Residues cysteine 48 and cysteine 104 are joined by a disulfide bond. 3 residues coordinate Ca(2+): asparagine 118, glutamine 169, and aspartate 178. Cysteines 157 and 171 form a disulfide. Arginine 206 serves as a coordination point for chloride. Aspartate 208 acts as the Nucleophile in catalysis. Histidine 212 is a binding site for Ca(2+). Glutamate 245 acts as the Proton donor in catalysis. Positions 308 and 343 each coordinate chloride. Disulfide bonds link cysteine 376–cysteine 382, cysteine 418–cysteine 441, and cysteine 448–cysteine 460.

This sequence belongs to the glycosyl hydrolase 13 family. In terms of assembly, monomer. Ca(2+) is required as a cofactor. It depends on chloride as a cofactor.

Its subcellular location is the secreted. It carries out the reaction Endohydrolysis of (1-&gt;4)-alpha-D-glucosidic linkages in polysaccharides containing three or more (1-&gt;4)-alpha-linked D-glucose units.. This chain is Alpha-amylase-related protein (Amyrel), found in Drosophila dossoui (Fruit fly).